Reading from the N-terminus, the 737-residue chain is Catalase-peroxidase (737 aa).

Residues 89 to 219 constitute a cross-link (tryptophyl-tyrosyl-methioninium (Trp-Tyr) (with M-245)); it reads WHSAGTYRVF…LAASHMGLIY (131 aa). Histidine 90 (proton acceptor) is an active-site residue. A cross-link (tryptophyl-tyrosyl-methioninium (Tyr-Met) (with W-89)) is located at residues 219-245; the sequence is YVNPEGPNGNPDPKAAARDIRVTFGRM. Histidine 260 is a binding site for heme b.

This sequence belongs to the peroxidase family. Peroxidase/catalase subfamily. Homodimer or homotetramer. Requires heme b as cofactor. In terms of processing, formation of the three residue Trp-Tyr-Met cross-link is important for the catalase, but not the peroxidase activity of the enzyme.

It is found in the cytoplasm. It carries out the reaction H2O2 + AH2 = A + 2 H2O. The enzyme catalyses 2 H2O2 = O2 + 2 H2O. Functionally, bifunctional enzyme with both catalase and broad-spectrum peroxidase activity. The sequence is that of Catalase-peroxidase from Aspergillus terreus (strain NIH 2624 / FGSC A1156).